The chain runs to 362 residues: Chorismate synthase (362 aa).

Position 47 (Arg47) interacts with NADP(+). FMN-binding positions include 124-126, Gly286, 301-305, and Arg327; these read RAS and KPTAT.

Belongs to the chorismate synthase family. As to quaternary structure, homotetramer. Requires FMNH2 as cofactor.

The enzyme catalyses 5-O-(1-carboxyvinyl)-3-phosphoshikimate = chorismate + phosphate. It functions in the pathway metabolic intermediate biosynthesis; chorismate biosynthesis; chorismate from D-erythrose 4-phosphate and phosphoenolpyruvate: step 7/7. Its function is as follows. Catalyzes the anti-1,4-elimination of the C-3 phosphate and the C-6 proR hydrogen from 5-enolpyruvylshikimate-3-phosphate (EPSP) to yield chorismate, which is the branch point compound that serves as the starting substrate for the three terminal pathways of aromatic amino acid biosynthesis. This reaction introduces a second double bond into the aromatic ring system. The chain is Chorismate synthase from Prochlorococcus marinus (strain SARG / CCMP1375 / SS120).